The chain runs to 204 residues: Holliday junction branch migration complex subunit RuvA (204 aa).

The domain I stretch occupies residues 1 to 64 (MIGRLCGTAE…EDAITLFGFI (64 aa)). A domain II region spans residues 65 to 143 (DAAERDWFRL…AMPTGSAFIP (79 aa)). Residues 144–154 (TGTAPPVAPPQ) form a flexible linker region. A domain III region spans residues 154–204 (QGKLADALSALVNLGYRRAEAEAALSAVQAEAGEDAALDELIRGGLRRLAR).

It belongs to the RuvA family. Homotetramer. Forms an RuvA(8)-RuvB(12)-Holliday junction (HJ) complex. HJ DNA is sandwiched between 2 RuvA tetramers; dsDNA enters through RuvA and exits via RuvB. An RuvB hexamer assembles on each DNA strand where it exits the tetramer. Each RuvB hexamer is contacted by two RuvA subunits (via domain III) on 2 adjacent RuvB subunits; this complex drives branch migration. In the full resolvosome a probable DNA-RuvA(4)-RuvB(12)-RuvC(2) complex forms which resolves the HJ.

It localises to the cytoplasm. In terms of biological role, the RuvA-RuvB-RuvC complex processes Holliday junction (HJ) DNA during genetic recombination and DNA repair, while the RuvA-RuvB complex plays an important role in the rescue of blocked DNA replication forks via replication fork reversal (RFR). RuvA specifically binds to HJ cruciform DNA, conferring on it an open structure. The RuvB hexamer acts as an ATP-dependent pump, pulling dsDNA into and through the RuvAB complex. HJ branch migration allows RuvC to scan DNA until it finds its consensus sequence, where it cleaves and resolves the cruciform DNA. In Acidiphilium cryptum (strain JF-5), this protein is Holliday junction branch migration complex subunit RuvA.